The chain runs to 216 residues: MVPMHLLGRLEKPLLLLCCASFLLGLALLGIKTDITPVAYFFLTLGGFFLFAYLLVRFLEWGLRSQLQSMQTESPGPSGNARDNEAFEVPVYEEAVVGLESQCRPQELDQPPPYSTVVIPPAPEEEQPSHPEGSRRAKLEQRRMASEGSMAQEGSPGRAPINLRLRGPRAVSTAPDLQSLAAVPTLEPLTPPPAYDVCFGHPDDDSVFYEDNWAPP.

The signal sequence occupies residues 1-25 (MVPMHLLGRLEKPLLLLCCASFLLG). Topologically, residues 26–34 (LALLGIKTD) are extracellular. A helical membrane pass occupies residues 35–55 (ITPVAYFFLTLGGFFLFAYLL). Residues 56–216 (VRFLEWGLRS…VFYEDNWAPP (161 aa)) lie on the Cytoplasmic side of the membrane. Positions 104–163 (RPQELDQPPPYSTVVIPPAPEEEQPSHPEGSRRAKLEQRRMASEGSMAQEGSPGRAPINL) are disordered. A compositionally biased stretch (basic and acidic residues) spans 127 to 145 (QPSHPEGSRRAKLEQRRMA). Phosphoserine is present on residues Ser-146 and Ser-155.

Interacts with isoform 2 of SLC4A1.

It localises to the membrane. In terms of biological role, may be involved in cellular trafficking of proteins such as SLC4A1. This is Transmembrane protein 139 (TMEM139) from Homo sapiens (Human).